The sequence spans 300 residues: 4-hydroxy-tetrahydrodipicolinate synthase (300 aa).

Thr45 is a pyruvate binding site. Tyr140 acts as the Proton donor/acceptor in catalysis. Lys169 functions as the Schiff-base intermediate with substrate in the catalytic mechanism. Ile210 is a binding site for pyruvate.

This sequence belongs to the DapA family. In terms of assembly, homotetramer; dimer of dimers.

The protein resides in the cytoplasm. It catalyses the reaction L-aspartate 4-semialdehyde + pyruvate = (2S,4S)-4-hydroxy-2,3,4,5-tetrahydrodipicolinate + H2O + H(+). It participates in amino-acid biosynthesis; L-lysine biosynthesis via DAP pathway; (S)-tetrahydrodipicolinate from L-aspartate: step 3/4. Its function is as follows. Catalyzes the condensation of (S)-aspartate-beta-semialdehyde [(S)-ASA] and pyruvate to 4-hydroxy-tetrahydrodipicolinate (HTPA). This Helicobacter pylori (strain J99 / ATCC 700824) (Campylobacter pylori J99) protein is 4-hydroxy-tetrahydrodipicolinate synthase.